Consider the following 103-residue polypeptide: Large ribosomal subunit protein uL24 (103 aa).

The protein belongs to the universal ribosomal protein uL24 family. In terms of assembly, part of the 50S ribosomal subunit.

Its function is as follows. One of two assembly initiator proteins, it binds directly to the 5'-end of the 23S rRNA, where it nucleates assembly of the 50S subunit. Functionally, one of the proteins that surrounds the polypeptide exit tunnel on the outside of the subunit. The chain is Large ribosomal subunit protein uL24 from Haemophilus ducreyi (strain 35000HP / ATCC 700724).